The chain runs to 401 residues: Argininosuccinate synthase (401 aa).

ATP is bound at residue 9 to 17 (AYSGGLDTS). Tyr-86 serves as a coordination point for L-citrulline. Residue Gly-116 participates in ATP binding. Positions 118, 122, and 123 each coordinate L-aspartate. An L-citrulline-binding site is contributed by Asn-122. L-citrulline-binding residues include Arg-126, Ser-174, Ser-183, Glu-259, and Tyr-271.

The protein belongs to the argininosuccinate synthase family. Type 1 subfamily. As to quaternary structure, homotetramer.

It is found in the cytoplasm. The enzyme catalyses L-citrulline + L-aspartate + ATP = 2-(N(omega)-L-arginino)succinate + AMP + diphosphate + H(+). The protein operates within amino-acid biosynthesis; L-arginine biosynthesis; L-arginine from L-ornithine and carbamoyl phosphate: step 2/3. This is Argininosuccinate synthase from Bacillus anthracis (strain A0248).